Reading from the N-terminus, the 773-residue chain is Ribosomal protein S6 kinase alpha-4 (773 aa).

In terms of domain architecture, Protein kinase 1 spans F33–F301. ATP contacts are provided by residues L39–V47 and K65. The active-site Proton acceptor is the D161. S196 is modified (phosphoserine; by autocatalysis). Residues Q302–N371 form the AGC-kinase C-terminal domain. The residue at position 343 (S343) is a Phosphoserine; by MAPK1, MAPK3 and MAPK14. S347 is subject to Phosphoserine. A phosphoserine; by autocatalysis mark is found at S360 and S365. ATP is bound by residues L417–C425 and K440. The Protein kinase 2 domain maps to L417–L674. Residue D530 is the Proton acceptor of the active site. T542 is subject to Phosphothreonine. T568 carries the phosphothreonine; by MAPK1, MAPK3 and MAPK14 modification. A phosphoserine mark is found at S634 and S678. Disordered stretches follow at residues L674–P696 and A728–S773. Residue T687 is modified to Phosphothreonine. Phosphoserine; by autocatalysis is present on residues S737 and S745.

The protein belongs to the protein kinase superfamily. AGC Ser/Thr protein kinase family. S6 kinase subfamily. In terms of assembly, forms a complex with either MAPK1/ERK2 or MAPK3/ERK1 in quiescent cells which transiently dissociates following mitogenic stimulation. Also associates with MAPK14/p38-alpha. Activated RPS6KA4 associates with and phosphorylates the NF-kappa-B p65 subunit RELA. It depends on Mg(2+) as a cofactor. Post-translationally, ser-343 and Thr-568 phosphorylation is required for kinase activity. Ser-343 and Ser-196 are autophosphorylated by the C-terminal kinase domain, and their phosphorylation is essential for the catalytic activity of the N-terminal kinase domain. Phosphorylated at Ser-343, Thr-568 and Thr-687 by MAPK1/ERK2, MAPK3/ERK1 and MAPK14/p38-alpha. Autophosphorylated at Ser-737 and Ser-745 by the N-terminal kinase domain.

The protein localises to the nucleus. It catalyses the reaction L-seryl-[protein] + ATP = O-phospho-L-seryl-[protein] + ADP + H(+). It carries out the reaction L-threonyl-[protein] + ATP = O-phospho-L-threonyl-[protein] + ADP + H(+). Its activity is regulated as follows. Activated by phosphorylation at Ser-343, Thr-568 and Thr-687 by MAPK1/ERK2, MAPK3/ERK1 and MAPK14/p38-alpha, and by further autophosphorylation of Ser-196, Ser-360 and Ser-365 by the activated C-terminal kinase domain. Functionally, serine/threonine-protein kinase that is required for the mitogen or stress-induced phosphorylation of the transcription factors CREB1 and ATF1 and for the regulation of the transcription factor RELA, and that contributes to gene activation by histone phosphorylation and functions in the regulation of inflammatory genes. Phosphorylates CREB1 and ATF1 in response to mitogenic or stress stimuli such as UV-C irradiation, epidermal growth factor (EGF) and anisomycin. Plays an essential role in the control of RELA transcriptional activity in response to TNF. Phosphorylates 'Ser-10' of histone H3 in response to mitogenics, stress stimuli and EGF, which results in the transcriptional activation of several immediate early genes, including proto-oncogenes c-fos/FOS and c-jun/JUN. May also phosphorylate 'Ser-28' of histone H3. Mediates the mitogen- and stress-induced phosphorylation of high mobility group protein 1 (HMGN1/HMG14). In lipopolysaccharide-stimulated primary macrophages, acts downstream of the Toll-like receptor TLR4 to limit the production of pro-inflammatory cytokines. Functions probably by inducing transcription of the MAP kinase phosphatase DUSP1 and the anti-inflammatory cytokine interleukin 10 (IL10), via CREB1 and ATF1 transcription factors. This Mus musculus (Mouse) protein is Ribosomal protein S6 kinase alpha-4 (Rps6ka4).